A 184-amino-acid chain; its full sequence is Large ribosomal subunit protein bL9 (184 aa).

Residues 156-184 (RQAKLQNQKSEQQEAEQDASKEAADADDS) are disordered. Over residues 173–184 (DASKEAADADDS) the composition is skewed to basic and acidic residues.

It belongs to the bacterial ribosomal protein bL9 family.

Functionally, binds to the 23S rRNA. This is Large ribosomal subunit protein bL9 from Wolbachia pipientis subsp. Culex pipiens (strain wPip).